Consider the following 204-residue polypeptide: Serotype 3 fimbrial subunit (204 aa).

An N-terminal signal peptide occupies residues Met1–Ala25. Cysteines 41 and 84 form a disulfide.

Belongs to the fimbrial protein family.

Its subcellular location is the fimbrium. Its function is as follows. Bordetella pertussis is the causative agent of whooping cough. An essential step in the disease process is the attachment of the bacteria to the ciliated epithelium of the respiratory tract, enabling the organism to resist normal host-clearance mechanisms. It is unclear which bacterial cell surface component are responsible for adherence but the fimbriae of B.pertussis are prime candidates for being involved in this process. The chain is Serotype 3 fimbrial subunit (fim3) from Bordetella pertussis (strain Tohama I / ATCC BAA-589 / NCTC 13251).